The sequence spans 500 residues: NAD(P)H-quinone oxidoreductase chain 4, chloroplastic (500 aa).

Transmembrane regions (helical) follow at residues 4 to 24 (FPWLTIFVGLPISAGFLIFVF), 35 to 55 (YTIFICVLELLLMTYAFSYYF), 84 to 104 (GLSLGPILLTGFITTLATLAA), 113 to 133 (LFHFLMLAMYSGQIGLFSSQN), 134 to 154 (LLLFFIMWELELIPVYLLLAM), 167 to 187 (FILYTAGSSVFLLMGALGIAF), 211 to 231 (ILFYIGFLIAFAVKSPIIPLH), 242 to 262 (HYSTCMLLAGILLKMGAYGLV), 272 to 292 (AHSIFSSWLIIVGAIQIIYAA), 305 to 325 (IAYSSVSHMGFTIIGICSISD), 330 to 350 (GAILQIISHGFIGAALFFLSG), 386 to 406 (LALPGMSGFFAELVVFFGIIT), 416 to 436 (ILITFVTAVGTILTPIYLLSM), and 463 to 483 (FVSIAILLPVISIGIYPDFVF).

Belongs to the complex I subunit 4 family.

It is found in the plastid. Its subcellular location is the chloroplast thylakoid membrane. It carries out the reaction a plastoquinone + NADH + (n+1) H(+)(in) = a plastoquinol + NAD(+) + n H(+)(out). It catalyses the reaction a plastoquinone + NADPH + (n+1) H(+)(in) = a plastoquinol + NADP(+) + n H(+)(out). The polypeptide is NAD(P)H-quinone oxidoreductase chain 4, chloroplastic (Populus trichocarpa (Western balsam poplar)).